The following is a 160-amino-acid chain: Phosphopantetheine adenylyltransferase (160 aa).

Residue Ser11 participates in substrate binding. Residues 11 to 12 (SF) and His19 each bind ATP. Positions 43, 75, and 89 each coordinate substrate. ATP is bound by residues 90-92 (GLR), Glu100, and 125-131 (YSFISSS).

It belongs to the bacterial CoaD family. In terms of assembly, homohexamer. Mg(2+) serves as cofactor.

Its subcellular location is the cytoplasm. The catalysed reaction is (R)-4'-phosphopantetheine + ATP + H(+) = 3'-dephospho-CoA + diphosphate. Its pathway is cofactor biosynthesis; coenzyme A biosynthesis; CoA from (R)-pantothenate: step 4/5. Its function is as follows. Reversibly transfers an adenylyl group from ATP to 4'-phosphopantetheine, yielding dephospho-CoA (dPCoA) and pyrophosphate. The chain is Phosphopantetheine adenylyltransferase from Staphylococcus aureus (strain Mu3 / ATCC 700698).